The sequence spans 346 residues: Phosphoribosylformylglycinamidine cyclo-ligase (346 aa).

The protein belongs to the AIR synthase family.

It localises to the cytoplasm. It carries out the reaction 2-formamido-N(1)-(5-O-phospho-beta-D-ribosyl)acetamidine + ATP = 5-amino-1-(5-phospho-beta-D-ribosyl)imidazole + ADP + phosphate + H(+). It participates in purine metabolism; IMP biosynthesis via de novo pathway; 5-amino-1-(5-phospho-D-ribosyl)imidazole from N(2)-formyl-N(1)-(5-phospho-D-ribosyl)glycinamide: step 2/2. The protein is Phosphoribosylformylglycinamidine cyclo-ligase of Polaromonas sp. (strain JS666 / ATCC BAA-500).